The chain runs to 371 residues: tRNA-specific 2-thiouridylase MnmA (371 aa).

Residues 7 to 14 (GLSGGVDS) and Met-33 contribute to the ATP site. Residues 103–105 (NPD) form an interaction with target base in tRNA region. Cys-108 serves as the catalytic Nucleophile. Residues Cys-108 and Cys-201 are joined by a disulfide bond. Position 133 (Gly-133) interacts with ATP. The tract at residues 151–153 (KDQ) is interaction with tRNA. The active-site Cysteine persulfide intermediate is Cys-201. The tract at residues 308-309 (RY) is interaction with tRNA.

Belongs to the MnmA/TRMU family.

Its subcellular location is the cytoplasm. It catalyses the reaction S-sulfanyl-L-cysteinyl-[protein] + uridine(34) in tRNA + AH2 + ATP = 2-thiouridine(34) in tRNA + L-cysteinyl-[protein] + A + AMP + diphosphate + H(+). Its function is as follows. Catalyzes the 2-thiolation of uridine at the wobble position (U34) of tRNA, leading to the formation of s(2)U34. This chain is tRNA-specific 2-thiouridylase MnmA, found in Mycoplasmopsis pulmonis (strain UAB CTIP) (Mycoplasma pulmonis).